Here is a 1383-residue protein sequence, read N- to C-terminus: Insulin receptor (1383 aa).

The N-terminal stretch at Met-1–Gly-26 is a signal peptide. 2 consecutive stretches face the extracellular side: residues His-27–Ser-759 and Ser-764–Lys-957. Cys-34 and Cys-52 form a disulfide bridge. 4 N-linked (GlcNAc...) asparagine glycosylation sites follow: Asn-42, Asn-51, Asn-104, and Asn-137. 9 cysteine pairs are disulfide-bonded: Cys-152/Cys-181, Cys-185/Cys-208, Cys-195/Cys-214, Cys-218/Cys-227, Cys-222/Cys-233, Cys-234/Cys-242, Cys-238/Cys-251, Cys-254/Cys-263, and Cys-267/Cys-279. A glycan (N-linked (GlcNAc...) asparagine) is linked at Asn-241. Asn-281 is a glycosylation site (N-linked (GlcNAc...) asparagine). 5 disulfides stabilise this stretch: Cys-285/Cys-310, Cys-292/Cys-300, Cys-314/Cys-327, Cys-330/Cys-334, and Cys-338/Cys-359. An N-linked (GlcNAc...) asparagine glycan is attached at Asn-321. N-linked (GlcNAc...) asparagine glycosylation occurs at Asn-363. Ser-399 is modified (phosphoserine). Tyr-400 carries the post-translational modification Phosphotyrosine. Ser-406 is subject to Phosphoserine. Residues Asn-423 and Asn-444 are each glycosylated (N-linked (GlcNAc...) asparagine). A disulfide bridge connects residues Cys-461 and Cys-494. N-linked (GlcNAc...) asparagine glycosylation is found at Asn-540, Asn-634, Asn-652, and Asn-699. One can recognise a Fibronectin type-III 1 domain in the interval Val-625 to Ser-727. Cys-675 and Cys-900 are oxidised to a cystine. A disordered region spans residues Ser-687–Glu-709. Residues Glu-734–Phe-742 form an insulin-binding region. Positions Thr-747–Asn-783 are disordered. 2 Fibronectin type-III domains span residues Glu-754–Glu-848 and Ile-854–Tyr-948. Residues Asn-770, Asn-783, Asn-921, and Asn-934 are each glycosylated (N-linked (GlcNAc...) asparagine). Polar residues predominate over residues Val-771–Asn-783. Residues Ile-958–Leu-978 form a helical membrane-spanning segment. Residues Phe-979 to Ser-1383 lie on the Cytoplasmic side of the membrane. The tract at residues Asn-997–Tyr-1000 is important for interaction with IRS1, SHC1 and STAT5B. The residue at position 1000 (Tyr-1000) is a Phosphotyrosine; by autocatalysis. In terms of domain architecture, Protein kinase spans Ile-1024–Phe-1299. Residues Ser-1034 and Lys-1058 each coordinate ATP. Residue Lys-1080 forms a Glycyl lysine isopeptide (Lys-Gly) (interchain with G-Cter in ubiquitin) linkage. Cys-1084 carries the post-translational modification S-nitrosocysteine. Glu-1105 to Asp-1111 provides a ligand contact to ATP. The active-site Proton donor/acceptor is the Asp-1160. Residues Arg-1164 to Asn-1165 and Asp-1178 each bind ATP. Phosphotyrosine; by autocatalysis is present on residues Tyr-1186, Tyr-1190, Tyr-1191, Tyr-1356, and Tyr-1362. A disordered region spans residues Pro-1361 to Ser-1383. The segment at Tyr-1362–Met-1365 is PIK3R1 binding.

Belongs to the protein kinase superfamily. Tyr protein kinase family. Insulin receptor subfamily. Tetramer of 2 alpha and 2 beta chains linked by disulfide bonds. The alpha chains carry the insulin-binding regions, while the beta chains carry the kinase domain. Forms a hybrid receptor with IGF1R, the hybrid is a tetramer consisting of 1 alpha chain and 1 beta chain of INSR and 1 alpha chain and 1 beta chain of IGF1R. Interacts with SORBS1 but dissociates from it following insulin stimulation. Binds SH2B2. Activated form of INSR interacts (via Tyr-1000) with the PTB/PID domains of IRS1 and SHC1. The sequences surrounding the phosphorylated NPXY motif contribute differentially to either IRS1 or SHC1 recognition. Interacts (via tyrosines in the C-terminus) with IRS2 (via PTB domain and 591-786 AA); the 591-786 would be the primary anchor of IRS2 to INSR while the PTB domain would have a stabilizing action on the interaction with INSR. Interacts with the SH2 domains of the 85 kDa regulatory subunit of PI3K (PIK3R1) in vitro, when autophosphorylated on tyrosine residues. Interacts with SOCS7. Interacts (via the phosphorylated Tyr-1000), with SOCS3. Interacts (via the phosphorylated Tyr-1186, Tyr-1190, Tyr-1191) with SOCS1. Interacts with ARRB2. Interacts with GRB10; this interaction blocks the association between IRS1/IRS2 and INSR, significantly reduces insulin-stimulated tyrosine phosphorylation of IRS1 and IRS2 and thus decreases insulin signaling. Interacts with PDPK1. Interacts (via Tyr-1191) with GRB14 (via BPS domain); this interaction protects the tyrosines in the activation loop from dephosphorylation, but promotes dephosphorylation of Tyr-1000, this results in decreased interaction with, and phosphorylation of, IRS1. Interacts (via subunit alpha) with ENPP1 (via 485-599 AA); this interaction blocks autophosphorylation. Interacts with PTPRE; this interaction is dependent of Tyr-1186, Tyr-1190 and Tyr-1191 of the INSR. Interacts with STAT5B (via SH2 domain). Interacts with PTPRF. Interacts with GRB7. Interacts with CAV2 (tyrosine-phosphorylated form); the interaction is increased with 'Tyr-27'phosphorylation of CAV2. Interacts with ATIC; ATIC together with PRKAA2/AMPK2 and HACD3/PTPLAD1 is proposed to be part of a signaling netwok regulating INSR autophosphorylation and endocytosis. Interacts with the insulin receptor SORL1; this interaction strongly increases its surface exposure, hence strengthens insulin signal reception. Interacts (tyrosine phosphorylated) with CCDC88A/GIV (via SH2-like region); binding requires autophosphorylation of the Insr C-terminal region. Interacts with GNAI3; the interaction is probably mediated by CCDC88A/GIV. Interacts with LMBRD1. Interacts (in response to insulin stimulation) with NCK1; this interaction may recruit PTPN1 to mediate INSR dephosphorylation. Interacts with CD248; this interaction diminishes INSR autophosphorylation. After being transported from the endoplasmic reticulum to the Golgi apparatus, the single glycosylated precursor is further glycosylated and then cleaved, followed by its transport to the plasma membrane. Post-translationally, autophosphorylated on tyrosine residues in response to insulin. Phosphorylation of Tyr-1000 is required for binding to IRS1, SHC1 and STAT5B. May also be phosphorylated at Tyr-1186 and Tyr-1191 by mTORC2. Dephosphorylated by PTPRE at Tyr-1000, Tyr-1186, Tyr-1190 and Tyr-1191. Dephosphorylated by PTPRF and PTPN1. Dephosphorylated by PTPN2; down-regulates insulin-induced signaling. In terms of processing, S-nitrosylation at Cys-1084 by BLVRB inhibits the receptor tyrosine kinase, thereby inhibiting insulin signaling. Ubiquitinated by MARCHF1; leading to degradation thereby reducing surface INSR expression.

The protein resides in the cell membrane. It is found in the late endosome. The protein localises to the lysosome. The catalysed reaction is L-tyrosyl-[protein] + ATP = O-phospho-L-tyrosyl-[protein] + ADP + H(+). Activated in response to insulin. Autophosphorylation activates the kinase activity. PTPN1, PTPRE and PTPRF dephosphorylate important tyrosine residues, thereby reducing INSR activity. Inhibited by ENPP1. GRB10 and GRB14 inhibit the catalytic activity of the INSR, they block access of substrates to the activated receptor. SOCS1 and SOCS3 act as negative regulators of INSR activity, they bind to the activated INRS and interfere with the phosphorylation of INSR substrates. Its function is as follows. Receptor tyrosine kinase which mediates the pleiotropic actions of insulin. Binding of insulin leads to phosphorylation of several intracellular substrates, including, insulin receptor substrates (IRS1, 2, 3, 4), SHC, GAB1, CBL and other signaling intermediates. Each of these phosphorylated proteins serve as docking proteins for other signaling proteins that contain Src-homology-2 domains (SH2 domain) that specifically recognize different phosphotyrosine residues, including the p85 regulatory subunit of PI3K and SHP2. Phosphorylation of IRSs proteins lead to the activation of two main signaling pathways: the PI3K-AKT/PKB pathway, which is responsible for most of the metabolic actions of insulin, and the Ras-MAPK pathway, which regulates expression of some genes and cooperates with the PI3K pathway to control cell growth and differentiation. Binding of the SH2 domains of PI3K to phosphotyrosines on IRS1 leads to the activation of PI3K and the generation of phosphatidylinositol-(3, 4, 5)-triphosphate (PIP3), a lipid second messenger, which activates several PIP3-dependent serine/threonine kinases, such as PDPK1 and subsequently AKT/PKB. The net effect of this pathway is to produce a translocation of the glucose transporter SLC2A4/GLUT4 from cytoplasmic vesicles to the cell membrane to facilitate glucose transport. Moreover, upon insulin stimulation, activated AKT/PKB is responsible for: anti-apoptotic effect of insulin by inducing phosphorylation of BAD; regulates the expression of gluconeogenic and lipogenic enzymes by controlling the activity of the winged helix or forkhead (FOX) class of transcription factors. Another pathway regulated by PI3K-AKT/PKB activation is mTORC1 signaling pathway which regulates cell growth and metabolism and integrates signals from insulin. AKT mediates insulin-stimulated protein synthesis by phosphorylating TSC2 thereby activating mTORC1 pathway. The Ras/RAF/MAP2K/MAPK pathway is mainly involved in mediating cell growth, survival and cellular differentiation of insulin. Phosphorylated IRS1 recruits GRB2/SOS complex, which triggers the activation of the Ras/RAF/MAP2K/MAPK pathway. In addition to binding insulin, the insulin receptor can bind insulin-like growth factors (IGFI and IGFII). When present in a hybrid receptor with IGF1R, binds IGF1. In adipocytes, inhibits lipolysis. The chain is Insulin receptor (Insr) from Rattus norvegicus (Rat).